Here is a 130-residue protein sequence, read N- to C-terminus: Small ribosomal subunit protein uS11 (130 aa).

The interval 1-21 (MAPQSKRSGGRKQKKHVPNGV) is disordered. The segment covering 8-17 (SGGRKQKKHV) has biased composition (basic residues).

Belongs to the universal ribosomal protein uS11 family. Part of the 30S ribosomal subunit. Interacts with proteins S7 and S18. Binds to IF-3.

Located on the platform of the 30S subunit, it bridges several disparate RNA helices of the 16S rRNA. Forms part of the Shine-Dalgarno cleft in the 70S ribosome. This is Small ribosomal subunit protein uS11 from Acaryochloris marina (strain MBIC 11017).